Reading from the N-terminus, the 406-residue chain is 8-amino-7-oxononanoate synthase (406 aa).

Arginine 21 is a binding site for substrate. 112–113 is a pyridoxal 5'-phosphate binding site; sequence GY. Histidine 137 lines the substrate pocket. Pyridoxal 5'-phosphate contacts are provided by serine 183, histidine 211, and threonine 239. An N6-(pyridoxal phosphate)lysine modification is found at lysine 242. Threonine 358 lines the substrate pocket.

The protein belongs to the class-II pyridoxal-phosphate-dependent aminotransferase family. BioF subfamily. As to quaternary structure, homodimer. Pyridoxal 5'-phosphate serves as cofactor.

It carries out the reaction 6-carboxyhexanoyl-[ACP] + L-alanine + H(+) = (8S)-8-amino-7-oxononanoate + holo-[ACP] + CO2. It participates in cofactor biosynthesis; biotin biosynthesis. Its function is as follows. Catalyzes the decarboxylative condensation of pimeloyl-[acyl-carrier protein] and L-alanine to produce 8-amino-7-oxononanoate (AON), [acyl-carrier protein], and carbon dioxide. This is 8-amino-7-oxononanoate synthase from Burkholderia orbicola (strain MC0-3).